Reading from the N-terminus, the 515-residue chain is Spermatogenesis-associated protein 2 (515 aa).

Residues 78-150 enclose the PUB domain; that stretch reads ALHCAFSMLE…VYKLKELVES (73 aa). The PIM motif signature appears at 321–338; the sequence is TYFSTQDDVDLYTDSEPR. Residues 429–452 are disordered; sequence GHQTQGLDRLAPVHSKPKPSTTAT.

Belongs to the SPATA2 family. Interacts (via the PIM motif) with RNF31/HOIP (via the PUB domain); the interaction is direct. Interacts (via the PUB domain) with CYLD; the interaction is direct. In terms of tissue distribution, widely expressed, with highest expression in testis, lung and intestine, and lower expression in brain, heart and spleen. Present at high level in Sertoli cells: expressed from stage I to stage XII of the testis seminiferous epithelium (at protein level).

Its subcellular location is the cytoplasm. It localises to the nucleus. Bridging factor that mediates the recruitment of CYLD to the LUBAC complex, thereby regulating TNF-alpha-induced necroptosis. Acts as a direct binding intermediate that bridges RNF31/HOIP, the catalytic subunit of the LUBAC complex, and the deubiquitinase (CYLD), thereby recruiting CYLD to the TNF-R1 signaling complex (TNF-RSC). Required to activate the 'Met-1'- (linear) and 'Lys-63'-linked deubiquitinase activities of CYLD. Controls the kinase activity of RIPK1 and TNF-alpha-induced necroptosis by promoting 'Met-1'-linked deubiquitination of RIPK1 by CYLD. This is Spermatogenesis-associated protein 2 from Mus musculus (Mouse).